A 156-amino-acid polypeptide reads, in one-letter code: ATP synthase subunit b', organellar chromatophore (156 aa).

A helical membrane pass occupies residues 23-43 (TLPLMAIQVVFLTFILNAIFF).

Belongs to the ATPase B chain family. As to quaternary structure, F-type ATPases have 2 components, F(1) - the catalytic core - and F(0) - the membrane proton channel. F(1) has five subunits: alpha(3), beta(3), gamma(1), delta(1), epsilon(1). F(0) has four main subunits: a(1), b(1), b'(1) and c(10-14). The alpha and beta chains form an alternating ring which encloses part of the gamma chain. F(1) is attached to F(0) by a central stalk formed by the gamma and epsilon chains, while a peripheral stalk is formed by the delta, b and b' chains.

Its subcellular location is the plastid. It is found in the organellar chromatophore thylakoid membrane. In terms of biological role, f(1)F(0) ATP synthase produces ATP from ADP in the presence of a proton or sodium gradient. F-type ATPases consist of two structural domains, F(1) containing the extramembraneous catalytic core and F(0) containing the membrane proton channel, linked together by a central stalk and a peripheral stalk. During catalysis, ATP synthesis in the catalytic domain of F(1) is coupled via a rotary mechanism of the central stalk subunits to proton translocation. Its function is as follows. Component of the F(0) channel, it forms part of the peripheral stalk, linking F(1) to F(0). The b'-subunit is a diverged and duplicated form of b found in plants and photosynthetic bacteria. In Paulinella chromatophora, this protein is ATP synthase subunit b', organellar chromatophore.